We begin with the raw amino-acid sequence, 225 residues long: NAD(P)H-quinone oxidoreductase subunit K, chloroplastic (225 aa).

Residues Cys-43, Cys-44, Cys-108, and Cys-139 each contribute to the [4Fe-4S] cluster site.

The protein belongs to the complex I 20 kDa subunit family. In terms of assembly, NDH is composed of at least 16 different subunits, 5 of which are encoded in the nucleus. [4Fe-4S] cluster is required as a cofactor.

Its subcellular location is the plastid. The protein localises to the chloroplast thylakoid membrane. It carries out the reaction a plastoquinone + NADH + (n+1) H(+)(in) = a plastoquinol + NAD(+) + n H(+)(out). The catalysed reaction is a plastoquinone + NADPH + (n+1) H(+)(in) = a plastoquinol + NADP(+) + n H(+)(out). In terms of biological role, NDH shuttles electrons from NAD(P)H:plastoquinone, via FMN and iron-sulfur (Fe-S) centers, to quinones in the photosynthetic chain and possibly in a chloroplast respiratory chain. The immediate electron acceptor for the enzyme in this species is believed to be plastoquinone. Couples the redox reaction to proton translocation, and thus conserves the redox energy in a proton gradient. The chain is NAD(P)H-quinone oxidoreductase subunit K, chloroplastic from Eucalyptus globulus subsp. globulus (Tasmanian blue gum).